Here is a 114-residue protein sequence, read N- to C-terminus: Putative antiporter subunit mnhC2 (114 aa).

A run of 3 helical transmembrane segments spans residues Leu-3–Ile-23, Ile-28–Thr-48, and Ala-72–Val-92.

Belongs to the CPA3 antiporters (TC 2.A.63) subunit C family. May form a heterooligomeric complex that consists of seven subunits: mnhA2, mnhB2, mnhC2, mnhD2, mnhE2, mnhF2 and mnhG2.

It localises to the cell membrane. The protein is Putative antiporter subunit mnhC2 (mnhC2) of Staphylococcus aureus (strain Mu3 / ATCC 700698).